A 223-amino-acid chain; its full sequence is Exosome complex component RRP46 (223 aa).

It belongs to the RNase PH family. Component of the RNA exosome complex. Specifically part of the catalytically inactive RNA exosome core complex (Exo-9) which may associate with the catalytic subunits RRP6 and DIS3 in cytoplasmic- and nuclear-specific RNA exosome complex forms. Exo-9 is formed by a hexameric base ring of RNase PH domain-containing subunits and a cap ring consisting of CSL4, RRP4 and RRP40.

The protein resides in the cytoplasm. The protein localises to the nucleus. It is found in the nucleolus. Non-catalytic component of the RNA exosome complex which has 3'-&gt;5' exoribonuclease activity and participates in a multitude of cellular RNA processing and degradation events. In the nucleus, the RNA exosome complex is involved in proper maturation of stable RNA species such as rRNA, snRNA and snoRNA, in the elimination of RNA processing by-products and non-coding 'pervasive' transcripts, such as antisense RNA species and cryptic unstable transcripts (CUTs), and of mRNAs with processing defects, thereby limiting or excluding their export to the cytoplasm. In the cytoplasm, the RNA exosome complex is involved in general mRNA turnover and in RNA surveillance pathways, preventing translation of aberrant mRNAs. The catalytic inactive RNA exosome core complex of 9 subunits (Exo-9) is proposed to play a pivotal role in the binding and presentation of RNA for ribonucleolysis, and to serve as a scaffold for the association with catalytic subunits and accessory proteins or complexes. RRP46 is part of the hexameric ring of RNase PH domain-containing subunits proposed to form a central channel which threads RNA substrates for degradation. The protein is Exosome complex component RRP46 (RRP46) of Saccharomyces cerevisiae (strain ATCC 204508 / S288c) (Baker's yeast).